Here is a 157-residue protein sequence, read N- to C-terminus: S-ribosylhomocysteine lyase (157 aa).

Residues histidine 54, histidine 58, and cysteine 124 each contribute to the Fe cation site.

Belongs to the LuxS family. In terms of assembly, homodimer. The cofactor is Fe cation.

The catalysed reaction is S-(5-deoxy-D-ribos-5-yl)-L-homocysteine = (S)-4,5-dihydroxypentane-2,3-dione + L-homocysteine. Functionally, involved in the synthesis of autoinducer 2 (AI-2) which is secreted by bacteria and is used to communicate both the cell density and the metabolic potential of the environment. The regulation of gene expression in response to changes in cell density is called quorum sensing. Catalyzes the transformation of S-ribosylhomocysteine (RHC) to homocysteine (HC) and 4,5-dihydroxy-2,3-pentadione (DPD). The chain is S-ribosylhomocysteine lyase from Levilactobacillus brevis (strain ATCC 367 / BCRC 12310 / CIP 105137 / JCM 1170 / LMG 11437 / NCIMB 947 / NCTC 947) (Lactobacillus brevis).